The chain runs to 58 residues: Small ribosomal subunit protein eS30 (58 aa).

The tract at residues 1–58 is disordered; the sequence is MGKVHGSLARAGKVKNQTPKVPKLDKKKRLTGRAKKRQLYNRRFSDNGGRKKGPNSKA. The segment covering 25 to 40 has biased composition (basic residues); the sequence is DKKKRLTGRAKKRQLY.

Belongs to the eukaryotic ribosomal protein eS30 family. In terms of assembly, component of the small ribosomal subunit. Mature ribosomes consist of a small (40S) and a large (60S) subunit. The 40S subunit contains about 32 different proteins and 1 molecule of RNA (18S). The 60S subunit contains about 42 different proteins and 3 molecules of RNA (28S, 5.8S and 5S).

It localises to the cytoplasm. Component of the ribosome, a large ribonucleoprotein complex responsible for the synthesis of proteins in the cell. The small ribosomal subunit (SSU) binds messenger RNAs (mRNAs) and translates the encoded message by selecting cognate aminoacyl-transfer RNA (tRNA) molecules. The large subunit (LSU) contains the ribosomal catalytic site termed the peptidyl transferase center (PTC), which catalyzes the formation of peptide bonds, thereby polymerizing the amino acids delivered by tRNAs into a polypeptide chain. The nascent polypeptides leave the ribosome through a tunnel in the LSU and interact with protein factors that function in enzymatic processing, targeting, and the membrane insertion of nascent chains at the exit of the ribosomal tunnel. In Plasmodium falciparum (isolate 3D7), this protein is Small ribosomal subunit protein eS30.